A 357-amino-acid chain; its full sequence is Alanine racemase (357 aa).

Residue Lys-33 is the Proton acceptor; specific for D-alanine of the active site. Position 33 is an N6-(pyridoxal phosphate)lysine (Lys-33). A substrate-binding site is contributed by Arg-129. The active-site Proton acceptor; specific for L-alanine is Tyr-253. Residue Met-301 coordinates substrate.

Belongs to the alanine racemase family. The cofactor is pyridoxal 5'-phosphate.

The enzyme catalyses L-alanine = D-alanine. The protein operates within amino-acid biosynthesis; D-alanine biosynthesis; D-alanine from L-alanine: step 1/1. Functionally, catalyzes the interconversion of L-alanine and D-alanine. May also act on other amino acids. The polypeptide is Alanine racemase (alr) (Pseudomonas savastanoi pv. phaseolicola (strain 1448A / Race 6) (Pseudomonas syringae pv. phaseolicola (strain 1448A / Race 6))).